Consider the following 238-residue polypeptide: MAREQLNGASYNWNAFPDRPQLAVALAGRVADRLTRAIAERGTAVLAVSGGTTPTKFFAALSAMPIAWDKVIVTLVDERFVPASSPRSNAGLVAANLLQNAAKAARFVPLYHEASGIEDAAASDDAALRSLPWPLDVVVLGMGPDGHTASFFPDADDLAELLDPASDRIILPVHAASAGEPRLTLTLARIIDAGFIALHIEGEDKRTAFDGAVAPGPRKPIRAVLDAAPRPVEVFWAP.

The protein belongs to the glucosamine/galactosamine-6-phosphate isomerase family. 6-phosphogluconolactonase subfamily.

The catalysed reaction is 6-phospho-D-glucono-1,5-lactone + H2O = 6-phospho-D-gluconate + H(+). It functions in the pathway carbohydrate degradation; pentose phosphate pathway; D-ribulose 5-phosphate from D-glucose 6-phosphate (oxidative stage): step 2/3. In terms of biological role, hydrolysis of 6-phosphogluconolactone to 6-phosphogluconate. The chain is 6-phosphogluconolactonase (pgl) from Mesorhizobium japonicum (strain LMG 29417 / CECT 9101 / MAFF 303099) (Mesorhizobium loti (strain MAFF 303099)).